A 285-amino-acid polypeptide reads, in one-letter code: MSIYLIALLPVLGWGFMPIIANLRKSTPEEQLLGTSISALLFALILFWILSPEITVLSFIVSFISGIFWSFGQLLQFKGIAASSVAKAMPISNGTQLVGATLFAVLVFREWQTVTAVIIGVVAVILILIGVVMTGFQKRGNHITESVSFHVYGIVILSSFFLTLYVVTNQLFDVTGFSIILPQAIGMLTCAIGINLAKKTAISRKNVTFNLMTGLSWSIANLGMFLATAVLGVATSFSISQACVIVATIGGILIFKQKKSPLEWTFILSGILLIMVGVVFLSLLK.

Helical transmembrane passes span 2-21 (SIYLIALLPVLGWGFMPIIA), 31-50 (QLLGTSISALLFALILFWIL), 55-77 (TVLSFIVSFISGIFWSFGQLLQF), 111-133 (WQTVTAVIIGVVAVILILIGVVM), 146-168 (SVSFHVYGIVILSSFFLTLYVVT), 172-194 (FDVTGFSIILPQAIGMLTCAIGI), 207-229 (VTFNLMTGLSWSIANLGMFLATA), 233-255 (VATSFSISQACVIVATIGGILIF), and 262-284 (LEWTFILSGILLIMVGVVFLSLL).

It belongs to the GRP transporter (TC 2.A.7.5) family.

It is found in the cell membrane. The chain is Putative sugar uptake protein lmo0424 from Listeria monocytogenes serovar 1/2a (strain ATCC BAA-679 / EGD-e).